The sequence spans 199 residues: MIQISDKAQTYFRKLIEREGVPGMGVRLSAVDAGTPRADARLEFAEPADLSGDEWAIDCDGFTLYVVAASVPWMDGAEIDYVTQSTGNQQLTIKAPKIKGEAPAESASMVERVRWVVENEINPQLASHGGRVAVQEVSAEGVVLLRFGGGCHGCGMADVTLKQGIEKTLMGRVPGVTAVRDATDHATGDAPYIPRDSAA.

Residues cysteine 151 and cysteine 154 each coordinate [4Fe-4S] cluster.

This sequence belongs to the NfuA family. In terms of assembly, homodimer. The cofactor is [4Fe-4S] cluster.

Functionally, involved in iron-sulfur cluster biogenesis. Binds a 4Fe-4S cluster, can transfer this cluster to apoproteins, and thereby intervenes in the maturation of Fe/S proteins. Could also act as a scaffold/chaperone for damaged Fe/S proteins. The sequence is that of Fe/S biogenesis protein NfuA from Xanthomonas axonopodis pv. citri (strain 306).